The chain runs to 30 residues: Photosystem I reaction center subunit XII (30 aa).

Residues 7–26 (IMVALFAALFTGILALRLGT) form a helical membrane-spanning segment.

This sequence belongs to the PsaM family.

The protein resides in the plastid. It localises to the chloroplast thylakoid membrane. This Mesostigma viride (Green alga) protein is Photosystem I reaction center subunit XII.